Consider the following 98-residue polypeptide: NADH-ubiquinone oxidoreductase chain 4L (98 aa).

3 helical membrane passes run 1–21, 29–49, and 61–81; these read MSLVHINILMAFIMSLTGLLM, ALLCLEGMMLSLFVLATLTIL, and IILLVFAACEAAIGLALLVMI.

This sequence belongs to the complex I subunit 4L family. Core subunit of respiratory chain NADH dehydrogenase (Complex I) which is composed of 45 different subunits.

The protein resides in the mitochondrion inner membrane. It carries out the reaction a ubiquinone + NADH + 5 H(+)(in) = a ubiquinol + NAD(+) + 4 H(+)(out). Core subunit of the mitochondrial membrane respiratory chain NADH dehydrogenase (Complex I) which catalyzes electron transfer from NADH through the respiratory chain, using ubiquinone as an electron acceptor. Part of the enzyme membrane arm which is embedded in the lipid bilayer and involved in proton translocation. This chain is NADH-ubiquinone oxidoreductase chain 4L (MT-ND4L), found in Delphinapterus leucas (Beluga whale).